A 594-amino-acid chain; its full sequence is Putative phospholipase B-like 2 (594 aa).

Residues 1 to 46 (MAAPVDGSSGGWAARALRRALALTSLTTLALLASLTGLLLSGPAGA) form the signal peptide. Asn-93 and Asn-115 each carry an N-linked (GlcNAc...) asparagine glycan. A disulfide bridge links Cys-147 with Cys-157. N-linked (GlcNAc...) asparagine glycosylation is found at Asn-236 and Asn-441. Cys-497 and Cys-500 form a disulfide bridge. An N-linked (GlcNAc...) asparagine glycan is attached at Asn-520.

It belongs to the phospholipase B-like family. Interacts with IGF2R. Post-translationally, the p76 protein is synthesized as a 76 kDa precursor which is then processed into a N-terminal 28 kDa form and a C-terminal 40 kDa form. The C-terminal peptide is further processed into a 15 kDa form. In terms of processing, glycosylated; contains mannose 6-phosphate sugars. As to expression, present at highest levels in spleen, lung and brain (at protein level).

It is found in the lysosome lumen. In terms of biological role, putative phospholipase. This Mus musculus (Mouse) protein is Putative phospholipase B-like 2 (Plbd2).